Reading from the N-terminus, the 242-residue chain is uncharacterized protein (242 aa).

Disordered stretches follow at residues 43–70 and 112–162; these read SRRS…TSKD and RMSR…VTPR. Polar residues predominate over residues 58–70; that stretch reads QSVSGRKNSTSKD. Composition is skewed to low complexity over residues 122–139 and 147–162; these read ERAA…AGHA and ADGA…VTPR.

This is an uncharacterized protein from Homo sapiens (Human).